A 645-amino-acid polypeptide reads, in one-letter code: Sodium-dependent nutrient amino acid transporter 1 (645 aa).

The segment at 1-48 is disordered; sequence MELKTMPHNGANGSPQHNNNNNSNNNNNVSSDTKTDNNEKEAQKKDEG. Topologically, residues 1-51 are cytoplasmic; that stretch reads MELKTMPHNGANGSPQHNNNNNSNNNNNVSSDTKTDNNEKEAQKKDEGRTN. The segment covering 18–32 has biased composition (low complexity); the sequence is NNNNNSNNNNNVSSD. Residues 33–48 are compositionally biased toward basic and acidic residues; it reads TKTDNNEKEAQKKDEG. 3 helical membrane-spanning segments follow: residues 52 to 72, 85 to 105, and 138 to 158; these read WSNG…LGNV, GAFL…MYYL, and TICI…YLFV. N-linked (GlcNAc...) asparagine glycosylation is found at Asn191 and Asn205. A run of 7 helical transmembrane segments spans residues 234 to 254, 264 to 284, 313 to 333, 347 to 367, 407 to 427, 454 to 474, and 480 to 500; these read IPDW…FLVI, AAYF…GRAV, AVVQ…MFAS, IVTT…FAIL, LFSV…IVAL, CGFL…LTLV, and TYVV…IYGL. Asn514 is a glycosylation site (N-linked (GlcNAc...) asparagine). 2 helical membrane passes run 522–542 and 559–579; these read CWSF…MATI and AGWL…WWYI.

The protein belongs to the sodium:neurotransmitter symporter (SNF) (TC 2.A.22) family.

Its subcellular location is the membrane. Unusual broad substrate spectrum amino acid:sodium cotransporter that promotes absorption of the D isomers of essential amino acids. Neutral amino acids are the preferred substrates, especially methionine and phenylalanine. This chain is Sodium-dependent nutrient amino acid transporter 1, found in Drosophila mojavensis (Fruit fly).